Reading from the N-terminus, the 153-residue chain is Large ribosomal subunit protein uL22 (153 aa).

Positions 128 to 153 (ADRRARRAAAKPAASASPAANEGVPA) are disordered. Residues 137-147 (AKPAASASPAA) show a composition bias toward low complexity.

It belongs to the universal ribosomal protein uL22 family. As to quaternary structure, part of the 50S ribosomal subunit.

This protein binds specifically to 23S rRNA; its binding is stimulated by other ribosomal proteins, e.g. L4, L17, and L20. It is important during the early stages of 50S assembly. It makes multiple contacts with different domains of the 23S rRNA in the assembled 50S subunit and ribosome. In terms of biological role, the globular domain of the protein is located near the polypeptide exit tunnel on the outside of the subunit, while an extended beta-hairpin is found that lines the wall of the exit tunnel in the center of the 70S ribosome. The chain is Large ribosomal subunit protein uL22 from Acidiphilium cryptum (strain JF-5).